Reading from the N-terminus, the 268-residue chain is MDTWKVGPVELKSRLILGSGKYEDFGVMREAIAAAKAEVVTVSVRRVELKAPGHVGLLEALEGVRLLPNTAGARTAEEAVRLARLGRLLTGERWVKLEVIPDPTYLLPDPLETLKAAERLIEEDFLVLPYMGPDLVLAKRLAALGTATVMPLAAPIGSGWGVRTRALLELFAREKASLPPVVVDAGLGLPSHAAEVMELGLDAVLVNTAIAEAQDPPAMAEAFRLAVEAGRKAYLAGPMRPREAASPSSPVEGVPFTPTGPRPGRGPQ.

Lys96 serves as the catalytic Schiff-base intermediate with DXP. Residues Gly157, 185-186, and 207-208 each bind 1-deoxy-D-xylulose 5-phosphate; these read AG and NT. A disordered region spans residues 238–268; the sequence is PMRPREAASPSSPVEGVPFTPTGPRPGRGPQ. A compositionally biased stretch (pro residues) spans 258–268; that stretch reads PTGPRPGRGPQ.

The protein belongs to the ThiG family. Homotetramer. Forms heterodimers with either ThiH or ThiS.

The protein localises to the cytoplasm. It carries out the reaction [ThiS sulfur-carrier protein]-C-terminal-Gly-aminoethanethioate + 2-iminoacetate + 1-deoxy-D-xylulose 5-phosphate = [ThiS sulfur-carrier protein]-C-terminal Gly-Gly + 2-[(2R,5Z)-2-carboxy-4-methylthiazol-5(2H)-ylidene]ethyl phosphate + 2 H2O + H(+). It participates in cofactor biosynthesis; thiamine diphosphate biosynthesis. In terms of biological role, catalyzes the rearrangement of 1-deoxy-D-xylulose 5-phosphate (DXP) to produce the thiazole phosphate moiety of thiamine. Sulfur is provided by the thiocarboxylate moiety of the carrier protein ThiS. In vitro, sulfur can be provided by H(2)S. The chain is Thiazole synthase from Thermus thermophilus (strain ATCC 27634 / DSM 579 / HB8).